Consider the following 342-residue polypeptide: Biotin synthase (342 aa).

In terms of domain architecture, Radical SAM core spans 63–288 (PEVEVEGIIS…RTMLRFAGGR (226 aa)). The [4Fe-4S] cluster site is built by cysteine 78, cysteine 82, and cysteine 85. 4 residues coordinate [2Fe-2S] cluster: cysteine 121, cysteine 154, cysteine 213, and arginine 283.

Belongs to the radical SAM superfamily. Biotin synthase family. In terms of assembly, homodimer. The cofactor is [4Fe-4S] cluster. [2Fe-2S] cluster is required as a cofactor.

It catalyses the reaction (4R,5S)-dethiobiotin + (sulfur carrier)-SH + 2 reduced [2Fe-2S]-[ferredoxin] + 2 S-adenosyl-L-methionine = (sulfur carrier)-H + biotin + 2 5'-deoxyadenosine + 2 L-methionine + 2 oxidized [2Fe-2S]-[ferredoxin]. It participates in cofactor biosynthesis; biotin biosynthesis; biotin from 7,8-diaminononanoate: step 2/2. Functionally, catalyzes the conversion of dethiobiotin (DTB) to biotin by the insertion of a sulfur atom into dethiobiotin via a radical-based mechanism. The chain is Biotin synthase from Mycobacteroides abscessus (strain ATCC 19977 / DSM 44196 / CCUG 20993 / CIP 104536 / JCM 13569 / NCTC 13031 / TMC 1543 / L948) (Mycobacterium abscessus).